The primary structure comprises 644 residues: Exoribonuclease 2 (644 aa).

Positions 189–516 constitute an RNB domain; that stretch reads REDLTALDFV…NHRLLKAVIK (328 aa). In terms of domain architecture, S1 motif spans 561–643; sequence GTRFAAEIVD…ETRGIIARPV (83 aa).

It belongs to the RNR ribonuclease family. RNase II subfamily.

The protein localises to the cytoplasm. It catalyses the reaction Exonucleolytic cleavage in the 3'- to 5'-direction to yield nucleoside 5'-phosphates.. Involved in mRNA degradation. Hydrolyzes single-stranded polyribonucleotides processively in the 3' to 5' direction. This chain is Exoribonuclease 2, found in Shigella sonnei (strain Ss046).